The primary structure comprises 729 residues: Catalase-peroxidase (729 aa).

The tryptophyl-tyrosyl-methioninium (Trp-Tyr) (with M-243) cross-link spans Trp-95–Tyr-217. Catalysis depends on His-96, which acts as the Proton acceptor. The tryptophyl-tyrosyl-methioninium (Tyr-Met) (with W-95) cross-link spans Tyr-217 to Met-243. His-258 serves as a coordination point for heme b.

It belongs to the peroxidase family. Peroxidase/catalase subfamily. Homodimer or homotetramer. The cofactor is heme b. Post-translationally, formation of the three residue Trp-Tyr-Met cross-link is important for the catalase, but not the peroxidase activity of the enzyme.

It catalyses the reaction H2O2 + AH2 = A + 2 H2O. The catalysed reaction is 2 H2O2 = O2 + 2 H2O. Bifunctional enzyme with both catalase and broad-spectrum peroxidase activity. The polypeptide is Catalase-peroxidase (Nitrobacter hamburgensis (strain DSM 10229 / NCIMB 13809 / X14)).